The sequence spans 413 residues: Glucose-1-phosphate adenylyltransferase (413 aa).

Residues Tyr102, Gly167, 182–183 (EK), and Ser200 contribute to the alpha-D-glucose 1-phosphate site.

Belongs to the bacterial/plant glucose-1-phosphate adenylyltransferase family. Homotetramer.

It carries out the reaction alpha-D-glucose 1-phosphate + ATP + H(+) = ADP-alpha-D-glucose + diphosphate. It participates in glycan biosynthesis; glycogen biosynthesis. Involved in the biosynthesis of ADP-glucose, a building block required for the elongation reactions to produce glycogen. Catalyzes the reaction between ATP and alpha-D-glucose 1-phosphate (G1P) to produce pyrophosphate and ADP-Glc. This is Glucose-1-phosphate adenylyltransferase from Deinococcus deserti (strain DSM 17065 / CIP 109153 / LMG 22923 / VCD115).